Here is a 271-residue protein sequence, read N- to C-terminus: Ribosomal RNA small subunit methyltransferase A (271 aa).

6 residues coordinate S-adenosyl-L-methionine: Asn-19, Leu-21, Gly-46, Glu-67, Asp-92, and Asn-114.

This sequence belongs to the class I-like SAM-binding methyltransferase superfamily. rRNA adenine N(6)-methyltransferase family. RsmA subfamily.

The protein localises to the cytoplasm. It catalyses the reaction adenosine(1518)/adenosine(1519) in 16S rRNA + 4 S-adenosyl-L-methionine = N(6)-dimethyladenosine(1518)/N(6)-dimethyladenosine(1519) in 16S rRNA + 4 S-adenosyl-L-homocysteine + 4 H(+). Its function is as follows. Specifically dimethylates two adjacent adenosines (A1518 and A1519) in the loop of a conserved hairpin near the 3'-end of 16S rRNA in the 30S particle. May play a critical role in biogenesis of 30S subunits. This is Ribosomal RNA small subunit methyltransferase A from Aeromonas hydrophila subsp. hydrophila (strain ATCC 7966 / DSM 30187 / BCRC 13018 / CCUG 14551 / JCM 1027 / KCTC 2358 / NCIMB 9240 / NCTC 8049).